A 1704-amino-acid polypeptide reads, in one-letter code: Phospholipid-transporting ATPase ABCA3 (1704 aa).

A glycan (N-linked (GlcNAc...) asparagine) is linked at Asn14. Residues Val22–Leu42 form a helical membrane-spanning segment. N-linked (GlcNAc...) asparagine glycosylation is found at Asn53, Asn124, and Asn140. 6 helical membrane passes run Tyr261–Val283, Ala307–Phe327, Ser344–Val364, Met373–Ala393, Leu405–Phe425, and Phe447–Thr467. Residues Ile530–Val763 form the ABC transporter 1 domain. Residue Gly566–Thr573 coordinates ATP. Asn620 and Asn783 each carry an N-linked (GlcNAc...) asparagine glycan. Helical transmembrane passes span Met925–Asn945, Ile1100–Val1120, Ser1144–Phe1164, Leu1183–Phe1203, Leu1213–Ile1233, Leu1245–Tyr1265, and Phe1306–Thr1326. The 234-residue stretch at Leu1381 to Lys1614 folds into the ABC transporter 2 domain. Position 1416 to 1423 (Gly1416 to Thr1423) interacts with ATP.

The protein belongs to the ABC transporter superfamily. ABCA family. As to quaternary structure, homooligomer; disulfide-linked. Post-translationally, N-glycosylated. Localization at intracellular vesicles is accompanied by processing of oligosaccharide from high mannose type to complex type. N-linked glycosylation at Asn-124 and Asn-140 is required for stability and efficient anterograde trafficking and prevents from proteasomal degradation. In terms of processing, proteolytically cleaved by CTSL and to a lower extent by CTSB within multivesicular bodies (MVB) and lamellar bodies (LB) leading to a mature form of 150 kDa. Expressed in brain, pancreas, skeletal muscle and heart. Highly expressed in the lung in an AT2-cell-specific manner. Weakly expressed in placenta, kidney and liver. Also expressed in medullary thyroid carcinoma cells (MTC) and in C-cell carcinoma.

Its subcellular location is the endosome. The protein resides in the multivesicular body membrane. The protein localises to the cytoplasmic vesicle membrane. It localises to the late endosome membrane. It is found in the lysosome membrane. It catalyses the reaction ATP + H2O + xenobioticSide 1 = ADP + phosphate + xenobioticSide 2.. The catalysed reaction is a 1,2-diacyl-sn-glycero-3-phosphocholine(in) + ATP + H2O = a 1,2-diacyl-sn-glycero-3-phosphocholine(out) + ADP + phosphate + H(+). It carries out the reaction ATP + H2O + phospholipidSide 1 = ADP + phosphate + phospholipidSide 2.. The enzyme catalyses 1,2-dihexadecanoyl-sn-glycero-3-phosphocholine(in) + ATP + H2O = 1,2-dihexadecanoyl-sn-glycero-3-phosphocholine(out) + ADP + phosphate + H(+). It catalyses the reaction cholesterol(in) + ATP + H2O = cholesterol(out) + ADP + phosphate + H(+). The catalysed reaction is a 1,2-diacyl-sn-glycero-3-phospho-(1'-sn-glycerol)(in) + ATP + H2O = a 1,2-diacyl-sn-glycero-3-phospho-(1'-sn-glycerol)(out) + ADP + phosphate + H(+). The ATP-dependent phosphatidylcholine transport is competitively inhibited by miltefosine. Catalyzes the ATP-dependent transport of phospholipids such as phosphatidylcholine and phosphoglycerol from the cytoplasm into the lumen side of lamellar bodies, in turn participates in the lamellar bodies biogenesis and homeostasis of pulmonary surfactant. Transports preferentially phosphatidylcholine containing short acyl chains. In addition plays a role as an efflux transporter of miltefosine across macrophage membranes and free cholesterol (FC) through intralumenal vesicles by removing FC from the cell as a component of surfactant and protects cells from free cholesterol toxicity. This is Phospholipid-transporting ATPase ABCA3 from Homo sapiens (Human).